Reading from the N-terminus, the 525-residue chain is MTENIHKHRILILDFGSQYTQLVARRVRELGVYCELWAWDVTEAQIRDFNPSGIILSGGPESTTEENSPRAPQYVFEAGVPVFGICYGMQTMAMQLGGHVEASNEREFGYAQVEVVNDSALVRGIEDALTADGKPLLDVWMSHGDKVTAIPSDFVTVASTESCPFAIMANEEKRFYGVQFHPEVTHTRQGMRMLERFVRDICQCEALWTPAKIIDDAVARIREQVGDDKVILGLSGGVDSSVTAMLLHRAIGKNLTCVFVDNGLLRLNEAEQVLDMFGDHFGLNIVHVPAEDRFLSALAGENDPEAKRKIIGRVFVEVFDEEALKLEDVKWLAQGTIYPDVIESAASATGKAHVIKSHHNVGGLPKEMKMGLVEPLKELFKDEVRKIGLELGLPYDMLYRHPFPGPGLGVRVLGEVKKEYCDLLRRADAIFIEELRKADLYDKVSQAFTVFLPVRSVGVMGDGRKYDWVVSLRAVETIDFMTAHWAHLPYDFLGRVSNRIINEVNGISRVVYDISGKPPATIEWE.

The Glutamine amidotransferase type-1 domain occupies 9-207 (RILILDFGSQ…VRDICQCEAL (199 aa)). Residue cysteine 86 is the Nucleophile of the active site. Active-site residues include histidine 181 and glutamate 183. A GMPS ATP-PPase domain is found at 208-400 (WTPAKIIDDA…LGLPYDMLYR (193 aa)). An ATP-binding site is contributed by 235 to 241 (SGGVDSS).

Homodimer.

The catalysed reaction is XMP + L-glutamine + ATP + H2O = GMP + L-glutamate + AMP + diphosphate + 2 H(+). It functions in the pathway purine metabolism; GMP biosynthesis; GMP from XMP (L-Gln route): step 1/1. Its function is as follows. Catalyzes the synthesis of GMP from XMP. The protein is GMP synthase [glutamine-hydrolyzing] of Escherichia coli O127:H6 (strain E2348/69 / EPEC).